The following is a 355-amino-acid chain: MTRGEARRPPQEFDRVLSSMCTTPHPAAREAAQAFLATNPGDPETYPAVAERERDAVALLGEIVGLSSPHGYIAAGGTEANLQAVRAARNRADADAVNVVAPASAHFSFQKAADVLGVELRLAPTDGDHRADVAAVADLVDGDTAVVVGVAGTTEYGRVDPIPALADIAAGVDANLHVDAAWGGFVLPFTDHDWSFADAPVNTMAIDPHKMGQAPVPAGGFLARDPETLDALAIETPYLESDTQPTLGGTRSGAGVAGALASLRALWPDGYREQYERTQGNAEYLAAELAARGYDVVDPELPLVAADMPDAEFQALREEGWRISRTASDALRVVCMPHVTREMLAAFLDDVDALA.

Position 210 is an N6-(pyridoxal phosphate)lysine (K210).

The protein belongs to the group II decarboxylase family. MfnA subfamily. It depends on pyridoxal 5'-phosphate as a cofactor.

The catalysed reaction is L-aspartate + H(+) = beta-alanine + CO2. Its pathway is cofactor biosynthesis; coenzyme A biosynthesis. In terms of biological role, catalyzes the decarboxylation of L-aspartate to produce beta-alanine. In Halobacterium salinarum (strain ATCC 29341 / DSM 671 / R1), this protein is Probable L-aspartate decarboxylase.